The sequence spans 482 residues: tRNA sulfurtransferase (482 aa).

Residues V58–V160 form the THUMP domain. ATP contacts are provided by residues L178 to F179, H203 to Y204, R260, G282, and Q291. An intrachain disulfide couples C341 to C444. Positions I400–R482 constitute a Rhodanese domain. C444 serves as the catalytic Cysteine persulfide intermediate.

The protein belongs to the ThiI family.

Its subcellular location is the cytoplasm. The enzyme catalyses [ThiI sulfur-carrier protein]-S-sulfanyl-L-cysteine + a uridine in tRNA + 2 reduced [2Fe-2S]-[ferredoxin] + ATP + H(+) = [ThiI sulfur-carrier protein]-L-cysteine + a 4-thiouridine in tRNA + 2 oxidized [2Fe-2S]-[ferredoxin] + AMP + diphosphate. The catalysed reaction is [ThiS sulfur-carrier protein]-C-terminal Gly-Gly-AMP + S-sulfanyl-L-cysteinyl-[cysteine desulfurase] + AH2 = [ThiS sulfur-carrier protein]-C-terminal-Gly-aminoethanethioate + L-cysteinyl-[cysteine desulfurase] + A + AMP + 2 H(+). The protein operates within cofactor biosynthesis; thiamine diphosphate biosynthesis. Its function is as follows. Catalyzes the ATP-dependent transfer of a sulfur to tRNA to produce 4-thiouridine in position 8 of tRNAs, which functions as a near-UV photosensor. Also catalyzes the transfer of sulfur to the sulfur carrier protein ThiS, forming ThiS-thiocarboxylate. This is a step in the synthesis of thiazole, in the thiamine biosynthesis pathway. The sulfur is donated as persulfide by IscS. The polypeptide is tRNA sulfurtransferase (Desulfurococcus amylolyticus (strain DSM 18924 / JCM 16383 / VKM B-2413 / 1221n) (Desulfurococcus kamchatkensis)).